The chain runs to 293 residues: Probable endonuclease 4 (293 aa).

Residues histidine 77, histidine 118, glutamate 153, aspartate 187, histidine 190, histidine 221, aspartate 234, histidine 236, and glutamate 266 each contribute to the Zn(2+) site.

Belongs to the AP endonuclease 2 family. The cofactor is Zn(2+).

The catalysed reaction is Endonucleolytic cleavage to 5'-phosphooligonucleotide end-products.. Functionally, endonuclease IV plays a role in DNA repair. It cleaves phosphodiester bonds at apurinic or apyrimidinic (AP) sites, generating a 3'-hydroxyl group and a 5'-terminal sugar phosphate. In Mesoplasma florum (strain ATCC 33453 / NBRC 100688 / NCTC 11704 / L1) (Acholeplasma florum), this protein is Probable endonuclease 4.